The chain runs to 253 residues: ATP synthase subunit a (253 aa).

6 consecutive transmembrane segments (helical) span residues 34–54, 89–109, 118–138, 156–178, 203–223, and 226–246; these read SSLF…LSFY, YFPF…IGMI, HIVF…LIGI, LAIV…FTLS, LSAG…LLAL, and LELA…CIYL.

Belongs to the ATPase A chain family. F-type ATPases have 2 components, CF(1) - the catalytic core - and CF(0) - the membrane proton channel. CF(1) has five subunits: alpha(3), beta(3), gamma(1), delta(1), epsilon(1). CF(0) has three main subunits: a, b and c.

It localises to the mitochondrion inner membrane. In terms of biological role, mitochondrial membrane ATP synthase (F(1)F(0) ATP synthase or Complex V) produces ATP from ADP in the presence of a proton gradient across the membrane which is generated by electron transport complexes of the respiratory chain. F-type ATPases consist of two structural domains, F(1) - containing the extramembraneous catalytic core and F(0) - containing the membrane proton channel, linked together by a central stalk and a peripheral stalk. During catalysis, ATP synthesis in the catalytic domain of F(1) is coupled via a rotary mechanism of the central stalk subunits to proton translocation. Key component of the proton channel; it may play a direct role in the translocation of protons across the membrane. The polypeptide is ATP synthase subunit a (ATP6) (Chondrus crispus (Carrageen Irish moss)).